Here is a 131-residue protein sequence, read N- to C-terminus: Large ribosomal subunit protein bL17 (131 aa).

This sequence belongs to the bacterial ribosomal protein bL17 family. As to quaternary structure, part of the 50S ribosomal subunit. Contacts protein L32.

The protein is Large ribosomal subunit protein bL17 of Sodalis glossinidius (strain morsitans).